Reading from the N-terminus, the 125-residue chain is Crustacean hyperglycemic hormones 5 (125 aa).

An N-terminal signal peptide occupies residues 1-34 (MKPGNTSFNMVSFRMVWTAMMATLLVAGASSAGT). 3 cysteine pairs are disulfide-bonded: cysteine 58–cysteine 94, cysteine 74–cysteine 90, and cysteine 77–cysteine 103. The residue at position 123 (valine 123) is a Valine amide.

It belongs to the arthropod CHH/MIH/GIH/VIH hormone family. As to expression, produced by the medulla terminalis X-organ in the eyestalks and transported to the sinus gland where they are stored and released.

It localises to the secreted. Its function is as follows. Hormone found in the sinus gland of isopods and decapods which controls the blood sugar level. Has a secretagogue action over the amylase released from the midgut gland. May act as a stress hormone and may be involved in the control of molting and reproduction. This is Crustacean hyperglycemic hormones 5 from Penaeus japonicus (Kuruma prawn).